The sequence spans 187 residues: ATP synthase subunit b, chloroplastic (187 aa).

Residues 34–56 (IINLSVVLGLVFTLGRNFLISLL) traverse the membrane as a helical segment.

It belongs to the ATPase B chain family. F-type ATPases have 2 components, F(1) - the catalytic core - and F(0) - the membrane proton channel. F(1) has five subunits: alpha(3), beta(3), gamma(1), delta(1), epsilon(1). F(0) has four main subunits: a(1), b(1), b'(1) and c(10-14). The alpha and beta chains form an alternating ring which encloses part of the gamma chain. F(1) is attached to F(0) by a central stalk formed by the gamma and epsilon chains, while a peripheral stalk is formed by the delta, b and b' chains.

It localises to the plastid. Its subcellular location is the chloroplast thylakoid membrane. F(1)F(0) ATP synthase produces ATP from ADP in the presence of a proton or sodium gradient. F-type ATPases consist of two structural domains, F(1) containing the extramembraneous catalytic core and F(0) containing the membrane proton channel, linked together by a central stalk and a peripheral stalk. During catalysis, ATP synthesis in the catalytic domain of F(1) is coupled via a rotary mechanism of the central stalk subunits to proton translocation. Its function is as follows. Component of the F(0) channel, it forms part of the peripheral stalk, linking F(1) to F(0). The chain is ATP synthase subunit b, chloroplastic from Pleurastrum terricola (Filamentous green alga).